Here is a 334-residue protein sequence, read N- to C-terminus: Leucine-rich repeat-containing protein 39 (334 aa).

Positions 10–47 form a coiled coil; that stretch reads AVNAVKEVWEKRIKKLNEDLKREKEFQQKLVRIWEERV. 9 LRR repeats span residues 84-105, 107-128, 130-151, 153-176, 177-198, 200-221, 223-244, 246-267, and 269-290; these read QLQE…IGRF, NLIV…IGLL, RLQE…LSYC, SLEK…SNLL, KLTH…VLNM, ALEW…IERM, NLHT…ISSM, NLST…MEKM, and NLRF…PPSE.

Interacts with MYH7 (via C-terminus).

The protein localises to the cytoplasm. Its subcellular location is the myofibril. The protein resides in the sarcomere. It localises to the m line. In terms of biological role, component of the sarcomeric M-band which plays a role in myocyte response to biomechanical stress. May regulate expression of other M-band proteins via an SRF-dependent pathway. Important for normal contractile function in heart. This chain is Leucine-rich repeat-containing protein 39, found in Bos taurus (Bovine).